The primary structure comprises 454 residues: Probable spastin homolog Bm1_53365 (454 aa).

218–225 (GPPGNGKT) is a binding site for ATP.

It belongs to the AAA ATPase family. Spastin subfamily. Homohexamer. The homohexamer is stabilized by ATP-binding. The homohexamer may adopt a ring conformation through which microtubules pass prior to being severed. Interacts with microtubules.

It is found in the cytoplasm. The protein resides in the cytoskeleton. Its subcellular location is the perinuclear region. The enzyme catalyses n ATP + n H2O + a microtubule = n ADP + n phosphate + (n+1) alpha/beta tubulin heterodimers.. Its function is as follows. Severs microtubules, probably in an ATP-dependent fashion. The chain is Probable spastin homolog Bm1_53365 from Brugia malayi (Filarial nematode worm).